Reading from the N-terminus, the 578-residue chain is tRNA (guanine(26)-N(2))-dimethyltransferase (578 aa).

Residues 18–451 (NVIRERNAEI…APPAVLWDIL (434 aa)) form the Trm1 methyltransferase domain. Arginine 43 is an S-adenosyl-L-methionine binding site. The segment at 63–92 (EKALKKQRKKVKEQEDEKTTPVPEDPPVYE) is disordered. Residues arginine 113 and aspartate 131 each contribute to the S-adenosyl-L-methionine site. Positions 295, 298, 335, and 338 each coordinate Zn(2+). A disordered region spans residues 491–578 (EANPKSRKSA…PKQPKLEATA (88 aa)). Positions 564-578 (DVEHLPKQPKLEATA) are enriched in basic and acidic residues.

It belongs to the class I-like SAM-binding methyltransferase superfamily. Trm1 family.

It carries out the reaction guanosine(26) in tRNA + 2 S-adenosyl-L-methionine = N(2)-dimethylguanosine(26) in tRNA + 2 S-adenosyl-L-homocysteine + 2 H(+). Dimethylates a single guanine residue at position 26 of most tRNAs using S-adenosyl-L-methionine as donor of the methyl groups. This chain is tRNA (guanine(26)-N(2))-dimethyltransferase, found in Drosophila melanogaster (Fruit fly).